The sequence spans 209 residues: Ribosomal RNA small subunit methyltransferase G (209 aa).

S-adenosyl-L-methionine is bound by residues Gly75, Leu80, Val126–Glu127, and Arg141.

Belongs to the methyltransferase superfamily. RNA methyltransferase RsmG family.

It is found in the cytoplasm. It catalyses the reaction guanosine(527) in 16S rRNA + S-adenosyl-L-methionine = N(7)-methylguanosine(527) in 16S rRNA + S-adenosyl-L-homocysteine. Specifically methylates the N7 position of guanine in position 527 of 16S rRNA. The polypeptide is Ribosomal RNA small subunit methyltransferase G (Colwellia psychrerythraea (strain 34H / ATCC BAA-681) (Vibrio psychroerythus)).